Here is a 132-residue protein sequence, read N- to C-terminus: Small ribosomal subunit protein uS8c (132 aa).

Belongs to the universal ribosomal protein uS8 family. As to quaternary structure, part of the 30S ribosomal subunit.

The protein localises to the plastid. It is found in the chloroplast. Functionally, one of the primary rRNA binding proteins, it binds directly to 16S rRNA central domain where it helps coordinate assembly of the platform of the 30S subunit. This is Small ribosomal subunit protein uS8c (rps8) from Thalassiosira pseudonana (Marine diatom).